A 79-amino-acid polypeptide reads, in one-letter code: Small ribosomal subunit protein bS18B (79 aa).

The protein belongs to the bacterial ribosomal protein bS18 family. In terms of assembly, part of the 30S ribosomal subunit. Forms a tight heterodimer with protein bS6.

Binds as a heterodimer with protein bS6 to the central domain of the 16S rRNA, where it helps stabilize the platform of the 30S subunit. The polypeptide is Small ribosomal subunit protein bS18B (Mycolicibacterium gilvum (strain PYR-GCK) (Mycobacterium gilvum (strain PYR-GCK))).